A 122-amino-acid chain; its full sequence is Probable DNA-directed RNA polymerase II subunit RPB11 (122 aa).

Belongs to the archaeal Rpo11/eukaryotic RPB11/RPC19 RNA polymerase subunit family. Component of the RNA polymerase II (Pol II) complex consisting of 12 subunits.

It localises to the nucleus. DNA-dependent RNA polymerase catalyzes the transcription of DNA into RNA using the four ribonucleoside triphosphates as substrates. Component of RNA polymerase II which synthesizes mRNA precursors and many functional non-coding RNAs. Pol II is the central component of the basal RNA polymerase II transcription machinery. It is composed of mobile elements that move relative to each other. RPB11 is part of the core element with the central large cleft. The sequence is that of Probable DNA-directed RNA polymerase II subunit RPB11 (rpb-11) from Caenorhabditis briggsae.